A 125-amino-acid polypeptide reads, in one-letter code: Glycine cleavage system H protein (125 aa).

A Lipoyl-binding domain is found at 23–104; it reads VVYIGITDYA…PYENWILKVK (82 aa). An N6-lipoyllysine modification is found at Lys-64.

The protein belongs to the GcvH family. As to quaternary structure, the glycine cleavage system is composed of four proteins: P, T, L and H. (R)-lipoate serves as cofactor.

Its function is as follows. The glycine cleavage system catalyzes the degradation of glycine. The H protein shuttles the methylamine group of glycine from the P protein to the T protein. In Clostridioides difficile (strain 630) (Peptoclostridium difficile), this protein is Glycine cleavage system H protein.